Consider the following 351-residue polypeptide: Tryptophan--tRNA ligase (351 aa).

Residues 11-13 (RPT) and 19-20 (GH) contribute to the ATP site. A 'HIGH' region motif is present at residues 12–20 (PTGALHLGH). D139 provides a ligand contact to L-tryptophan. Residues 151–153 (GRD), L190, and 198–202 (KMSKS) each bind ATP. Positions 198-202 (KMSKS) match the 'KMSKS' region motif.

This sequence belongs to the class-I aminoacyl-tRNA synthetase family. Homodimer.

Its subcellular location is the cytoplasm. The enzyme catalyses tRNA(Trp) + L-tryptophan + ATP = L-tryptophyl-tRNA(Trp) + AMP + diphosphate + H(+). Its function is as follows. Catalyzes the attachment of tryptophan to tRNA(Trp). This is Tryptophan--tRNA ligase from Borreliella burgdorferi (strain ATCC 35210 / DSM 4680 / CIP 102532 / B31) (Borrelia burgdorferi).